Reading from the N-terminus, the 305-residue chain is Porphobilinogen deaminase (305 aa).

The residue at position 239 (C239) is an S-(dipyrrolylmethanemethyl)cysteine.

Belongs to the HMBS family. As to quaternary structure, monomer. Requires dipyrromethane as cofactor.

It carries out the reaction 4 porphobilinogen + H2O = hydroxymethylbilane + 4 NH4(+). It functions in the pathway porphyrin-containing compound metabolism; protoporphyrin-IX biosynthesis; coproporphyrinogen-III from 5-aminolevulinate: step 2/4. Functionally, tetrapolymerization of the monopyrrole PBG into the hydroxymethylbilane pre-uroporphyrinogen in several discrete steps. The chain is Porphobilinogen deaminase from Dichelobacter nodosus (strain VCS1703A).